The primary structure comprises 141 residues: uncharacterized protein (141 aa).

The next 2 helical transmembrane spans lie at 12-32 and 35-55; these read GIAGCGAGGVVMAIASVTLVT and PGRVLTGVAALGLILFASATW.

The protein resides in the cell membrane. This is an uncharacterized protein from Mycobacterium tuberculosis (strain CDC 1551 / Oshkosh).